A 126-amino-acid polypeptide reads, in one-letter code: Sperm-specific H1/protamine-like protein type 2 (126 aa).

Residues 5–84 (KKPTTLSMIV…GATGSFRVGK (80 aa)) form the H15 domain. Positions 74–126 (SGATGSFRVGKAPASPKKAKKAKSPKKKSSKKSKNKSNNAKAKKSPKKKADSN) are disordered. Residues 90–120 (KKAKKAKSPKKKSSKKSKNKSNNAKAKKSPK) are compositionally biased toward basic residues.

OE2 and OE3 are produced by post-translational cleavage of a common precursor. As to expression, sperm.

The protein localises to the nucleus. The protein resides in the chromosome. Linker histones are implicated in chromatin remodeling and/or transcriptional regulation during spermiogenesis, the process of spermatid maturation into spermatozoa. Protamines substitute for histones in the chromatin of sperm during the haploid phase of spermatogenesis. They compact sperm DNA into a highly condensed, stable and inactive complex. This is Sperm-specific H1/protamine-like protein type 2 from Ostrea edulis (Native oyster).